A 305-amino-acid chain; its full sequence is Thymidylate synthase (305 aa).

Residues R26 and R160–R161 contribute to the dUMP site. The active-site Nucleophile is the C180. Residues R207–D210, N218, and H248–Y250 contribute to the dUMP site. D210 lines the (6R)-5,10-methylene-5,6,7,8-tetrahydrofolate pocket. A304 serves as a coordination point for (6R)-5,10-methylene-5,6,7,8-tetrahydrofolate.

Belongs to the thymidylate synthase family. Bacterial-type ThyA subfamily. As to quaternary structure, homodimer.

It is found in the cytoplasm. It carries out the reaction dUMP + (6R)-5,10-methylene-5,6,7,8-tetrahydrofolate = 7,8-dihydrofolate + dTMP. It participates in pyrimidine metabolism; dTTP biosynthesis. Catalyzes the reductive methylation of 2'-deoxyuridine-5'-monophosphate (dUMP) to 2'-deoxythymidine-5'-monophosphate (dTMP) while utilizing 5,10-methylenetetrahydrofolate (mTHF) as the methyl donor and reductant in the reaction, yielding dihydrofolate (DHF) as a by-product. This enzymatic reaction provides an intracellular de novo source of dTMP, an essential precursor for DNA biosynthesis. The polypeptide is Thymidylate synthase (Sinorhizobium fredii (strain NBRC 101917 / NGR234)).